Consider the following 343-residue polypeptide: Apolipoprotein L6 (343 aa).

A compositionally biased stretch (basic and acidic residues) spans M1–E10. The segment at M1–L24 is disordered.

This sequence belongs to the apolipoprotein L family. Widely expressed; highly expressed in the uterus, fetal brain and spinal cord, also detected in heart, liver, lung, colon, spleen, thymus, prostate, placenta, adrenal gland, salivary and mammary gland.

The protein resides in the cytoplasm. May affect the movement of lipids in the cytoplasm or allow the binding of lipids to organelles. The polypeptide is Apolipoprotein L6 (APOL6) (Homo sapiens (Human)).